Consider the following 464-residue polypeptide: Macrophage metalloelastase (464 aa).

The first 17 residues, 1-17 (MKFLLLILTLWVTSSGA), serve as a signal peptide directing secretion. A propeptide spans 18 to 100 (DPLKENDMLF…DVYHFKTMPG (83 aa)) (activation peptide). A glycan (N-linked (GlcNAc...) asparagine) is linked at N69. The Cysteine switch motif lies at 85-92 (PRCGVPDV). Position 87 (C87) interacts with Zn(2+). Residues D119 and D153 each contribute to the Ca(2+) site. Zn(2+) is bound by residues H163 and D165. Ca(2+)-binding residues include D170, G171, G173, and V175. H178 lines the Zn(2+) pocket. The Ca(2+) site is built by G185, G187, and D189. H191 is a binding site for Zn(2+). Ca(2+) is bound by residues D193, E194, and E196. H213 contributes to the Zn(2+) binding site. Residue E214 is part of the active site. Zn(2+) contacts are provided by H217 and H223. 4 Hemopexin repeats span residues 274 to 323 (PTAC…WPTL), 324 to 370 (PSGI…GFPD), 372 to 420 (VKKI…FPGI), and 421 to 464 (GPKI…WFDC). A disulfide bridge connects residues C277 and C464. Positions 284, 328, 376, and 425 each coordinate Ca(2+).

Belongs to the peptidase M10A family. It depends on Ca(2+) as a cofactor. The cofactor is Zn(2+).

It localises to the secreted. It is found in the extracellular space. The protein resides in the extracellular matrix. The catalysed reaction is Hydrolysis of soluble and insoluble elastin. Specific cleavages are also produced at 14-Ala-|-Leu-15 and 16-Tyr-|-Leu-17 in the B chain of insulin.. Its function is as follows. May be involved in tissue injury and remodeling. Has significant elastolytic activity. Can accept large and small amino acids at the P1' site, but has a preference for leucine. Aromatic or hydrophobic residues are preferred at the P1 site, with small hydrophobic residues (preferably alanine) occupying P3. The polypeptide is Macrophage metalloelastase (MMP12) (Oryctolagus cuniculus (Rabbit)).